The chain runs to 98 residues: ESAT-6-like protein EsxK (98 aa).

Belongs to the WXG100 family. CFP-10 subfamily. In terms of assembly, strongly interacts with EsxL to form a heterodimeric complex under reducing conditions.

Its subcellular location is the secreted. This Mycobacterium tuberculosis (strain CDC 1551 / Oshkosh) protein is ESAT-6-like protein EsxK.